Here is a 1020-residue protein sequence, read N- to C-terminus: Glucan endo-1,3-beta-D-glucosidase (1020 aa).

The first 25 residues, 1-25, serve as a signal peptide directing secretion; it reads MKGKNVQLLFALVVIILLFPTGASA. The interval 28 to 251 is beta-sandwich subdomain; the sequence is HAVSVGKGSY…ADYIAIAKLP (224 aa). A GH81 domain is found at 28-722; the sequence is HAVSVGKGSY…HWIHNLAELG (695 aa). Residues 252–350 are alpha/beta subdomain; that stretch reads EKDGNMLAKF…EGKRFTTELT (99 aa). Residues 360-722 are (alpha/beta)6 barrel subdomain; the sequence is DLGDYDRERL…HWIHNLAELG (363 aa). 11 residues coordinate (1,3-beta-D-glucosyl)n: Tyr-387, Lys-391, His-458, Asp-466, His-470, Asp-530, Asn-540, Glu-542, Glu-546, Glu-699, and Arg-704. Residue Asp-466 is part of the active site. Catalysis depends on residues Glu-542 and Glu-546. The interval 771–790 is disordered; that stretch reads HSFNIGNGDGPTNPDPSEPD. In terms of domain architecture, CBM6 spans 796-922; that stretch reads ERIQAEAYDA…LMNVNWFVFR (127 aa). (1,3-beta-D-glucosyl)n contacts are provided by Glu-812, Trp-825, Asp-853, Asn-878, Asp-912, and Asn-915. The CBM56 domain maps to 928–1020; the sequence is NGDSHTHPDY…YTTEWFTYSR (93 aa).

It belongs to the glycosyl hydrolase 81 family.

It localises to the secreted. The catalysed reaction is Hydrolysis of (1-&gt;3)-beta-D-glucosidic linkages in (1-&gt;3)-beta-D-glucans.. Cleaves internal linkages in 1,3-beta-glucan. May contribute to plant biomass degradation. The chain is Glucan endo-1,3-beta-D-glucosidase from Halalkalibacterium halodurans (strain ATCC BAA-125 / DSM 18197 / FERM 7344 / JCM 9153 / C-125) (Bacillus halodurans).